Reading from the N-terminus, the 351-residue chain is MTVDRLTSRSRAAGUAAKIAPGDLERILATLPRDPREGERVVVGTRDNEDAAIVRVPGGKAIVQTLDFFTPIVDDPYLFGQIAAANALSDVYAMGGEPWCALNIVCFPVKELPEDILADILRGGADKVREAGAVLVGGHSIEDESIKYGLSVTGIIDPDCYATNTGLRPGDVLLLTKPLGSGVLATAVKAGWDGFEAHEQELGRWGAMLNRAGGRVIRELGLAAATDVTGFGLGGHLLEMANASNMSVHVDVSTLPLMPAVLDLVATGLLPAGSHANRHFCSGNVSVHPEVDSLLVDIVFDAQTSGGLILAVPPHLVDDACSILRAEDAPFWRIGHVEEMGEGVPRLVLQP.

Residue Sec-15 is part of the active site. Position 15 (Sec-15) is a non-standard amino acid, selenocysteine. Residues Lys-18 and 47–49 (DNE) each bind ATP. Asp-50 contacts Mg(2+). Residues Asp-67, Asp-90, and 138–140 (GHS) contribute to the ATP site. Asp-90 serves as a coordination point for Mg(2+). Asp-227 contacts Mg(2+).

Belongs to the selenophosphate synthase 1 family. Class I subfamily. In terms of assembly, homodimer. The cofactor is Mg(2+).

It catalyses the reaction hydrogenselenide + ATP + H2O = selenophosphate + AMP + phosphate + 2 H(+). Synthesizes selenophosphate from selenide and ATP. This chain is Selenide, water dikinase, found in Nitratidesulfovibrio vulgaris (strain ATCC 29579 / DSM 644 / CCUG 34227 / NCIMB 8303 / VKM B-1760 / Hildenborough) (Desulfovibrio vulgaris).